Consider the following 258-residue polypeptide: UBX domain-containing protein 2A (258 aa).

Basic and acidic residues predominate over residues 1 to 14; it reads MKEVDNLDSIKEEW. The segment at 1–30 is disordered; that stretch reads MKEVDNLDSIKEEWACETGPPDSQPLNDNQ. The required for interaction with CHRNA3 stretch occupies residues 1-152; the sequence is MKEVDNLDSI…SATPRIVSKA (152 aa). The tract at residues 1–165 is required for inhibition of CHRNA3 ubiquitination and translocation of CHRNA3 to the plasma membrane resulting in an increase in acetylcholine-gated nicotinic acetylcholine receptor currents; that stretch reads MKEVDNLDSI…EVDNKSTLSA (165 aa). An SEP domain is found at 61–125; that stretch reads QVDVNIKLWK…VEDKKNEVCM (65 aa). Residues 168–258 are required for interaction with VCP; the sequence is LNNLEPITRI…QKTAEPFRKL (91 aa). One can recognise a UBX domain in the interval 170-247; it reads NLEPITRIQI…DLKNAVIIQR (78 aa).

As to quaternary structure, part of a complex composed of STUB1/CHIP, VCP/p97, CHRNA3, and UBXN2A that modulates the ubiquitination and endoplasmic reticulum-associated degradation (ERAD) of CHRNA3. Within the complex UBXN2A acts as a scaffold protein required for the interaction of CHRNA3 with VCP/p97, this interaction also inhibits CHRNA3 ubiquitination by STUB1/CHIP and subsequently ERAD. Interacts (via SEP domain) with CHRNA3 and interacts (via UBX domain) with VCP/P97; these interactions are required for the interaction of CHRNA3 with the STUB1-VCP-UBXN2A complex. Interacts with HSPA9/MOT-2 (via SBD domain); the interaction inhibits HSPA9/MOT-2 interaction with and degradation of p53, thereby promotes p53 translocation to the nucleus. Interacts with RICTOR. Ubiquitinated. In terms of tissue distribution, expressed in the prefrontal cortex (at protein level). Expressed in the habenula and hippocampus (at protein level). Expressed in peripheral ganglia.

It is found in the golgi apparatus. The protein resides in the endoplasmic reticulum. Its subcellular location is the perikaryon. It localises to the cell projection. The protein localises to the dendrite. It is found in the nucleus. The protein resides in the cytoplasm. Acts to repress the ubiquitination and subsequent endoplasmic reticulum-associated degradation of CHRNA3 by the STUB1-VCP-UBXN2A complex in cortical neurons. Also acts to promote the translocation of CHRNA3 to the plasma membrane and subsequently increases plasma membrane acetylcholine-gated ion-channel activation. Plays a role in the inhibition of STUB1-mediated TP53 degradation, via its interaction with HSPA9 which acts to inhibit TP53 binding to HSPA9. Positively mediates the ubiquitination and proteosomal degradation of RICTOR, may thereby act as a negative regulator of the mTORC2 pathway. The chain is UBX domain-containing protein 2A from Mus musculus (Mouse).